The sequence spans 135 residues: Helix-loop-helix protein 2 (135 aa).

The segment at 1-81 is disordered; that stretch reads MMLSPDQAAD…RRATAKYRSA (81 aa). Residues 10 to 21 show a composition bias toward basic and acidic residues; that stretch reads DSDHPSSTHSDP. Basic residues predominate over residues 68–81; the sequence is KRRRRRATAKYRSA. The 53-residue stretch at 77–129 folds into the bHLH domain; the sequence is KYRSAHATRERIRVEAFNLAFAELRKLLPTLPPDKKLSKIEILRLAICYISYL.

Homodimer. Interacts and may form heterodimers with STAT3. In terms of tissue distribution, expressed in developing neurons. Transiently expressed in the cerebellum during postnatal development, exclusively in the premigratory zone of the external granule layer where postmitotic neurons undergo initial stages of neuronal differentiation. Expression is not detected in mature neurons. Expressed in the anterior lobe of the adult pituitary.

The protein resides in the nucleus. Its function is as follows. Transcription factor which binds the E box motif 5'-CA[TC][AG]TG-3'. Involved in regulating energy expenditure, body mass, voluntary physical activity, mating behavior and reproductive longevity, acting through the hypothalamic-pituitary-gonadal axis. Acts as a transcriptional activator of target genes, including Ndn, Pcsk1, Mc4r. Is also a transcriptional activator of KISS1. May act centrally to regulate function of both white and brown adipose tissue. Together with NHLH1, required to maintain migration and survival of cells in the anterior extramural migration stream (aes), which forms the precerebellar nuclei. Also, in concert with Nhlh1, may determine fate of gonadotropin releasing hormone-1 (GnRH-1) neurons. The chain is Helix-loop-helix protein 2 (Nhlh2) from Mus musculus (Mouse).